We begin with the raw amino-acid sequence, 88 residues long: Cell division topological specificity factor (88 aa).

Belongs to the MinE family.

Prevents the cell division inhibition by proteins MinC and MinD at internal division sites while permitting inhibition at polar sites. This ensures cell division at the proper site by restricting the formation of a division septum at the midpoint of the long axis of the cell. The sequence is that of Cell division topological specificity factor from Clostridium novyi (strain NT).